The chain runs to 471 residues: BRISC complex subunit FAM175B (471 aa).

The MPN domain maps to 7-161; sequence LVTISGAALS…THKFRHVFLR (155 aa). The stretch at 245-272 forms a coiled coil; the sequence is ESDLEVAELEKQVHELKIKIATQQLAKR. Positions 343-445 are disordered; the sequence is AEKSRRAGRS…FSDAECPISS (103 aa). The segment covering 359–370 has biased composition (low complexity); that stretch reads NQQQETQNFFTN.

This sequence belongs to the FAM175 family. Abro1 subfamily. Component of the BRISC complex, at least composed of FAM175B/ABRO1, BRCC3/BRCC36, BABAM2 and BABAM1/NBA1. Within the complex, interacts directly with BRCC3/BRCC36. The heterodimer with BRCC3/BRCC36 assembles into a heterotetramer. The BRISC complex binds polyubiquitin.

It is found in the cytoplasm. The protein localises to the nucleus. The protein resides in the cytoskeleton. It localises to the spindle pole. In terms of biological role, component of the BRISC complex that specifically cleaves 'Lys-63'-linked polyubiquitin, leaving the last ubiquitin chain attached to its substrates. Does not have activity by itself, but the catalytic subunit BRCC3/BRCC36 needs to be associated into a heterotetramer with FAM175B for minimal in vitro activity. May act as a central scaffold protein that assembles the various components of the BRISC complex and retains them in the cytoplasm. Plays a role in regulating the onset of apoptosis via its role in modulating 'Lys-63'-linked ubiquitination of target proteins. Required for normal mitotic spindle assembly and microtubule attachment to kinetochores via its role in deubiquitinating numa1. This Camponotus floridanus (Florida carpenter ant) protein is BRISC complex subunit FAM175B.